Reading from the N-terminus, the 403-residue chain is Ubiquitin-like modifier-activating enzyme 5 (403 aa).

G81, D102, K125, N148, and N182 together coordinate ATP. Zn(2+) contacts are provided by C224 and C227. Residue C248 is the Glycyl thioester intermediate of the active site. Zn(2+) is bound by residues C301 and C306. Over residues C306–K315 the composition is skewed to basic and acidic residues. Residues C306–D337 are disordered. The UFM1-interacting sequence (UIS) motif lies at V333–V345. The interval S346–K376 is linker. S357 and S392 each carry phosphoserine. The short motif at D388 to M403 is the UFC1-binding sequence (UFC) element.

It belongs to the ubiquitin-activating E1 family. UBA5 subfamily. In terms of assembly, homodimer; homodimerization is required for UFM1 activation. Interacts (via UIS motif) with UFM1; binds UFM1 via a trans-binding mechanism in which UFM1 interacts with distinct sites in both subunits of the UBA5 homodimer. Interacts (via C-terminus) with UFC1. Interacts (via UIS motif) with GABARAPL2 and, with lower affinity, with GABARAP and GABARAPL1.

It localises to the cytoplasm. It is found in the nucleus. The protein localises to the endoplasmic reticulum membrane. The protein resides in the golgi apparatus. E1-like enzyme which specifically catalyzes the first step in ufmylation. Activates UFM1 by first adenylating its C-terminal glycine residue with ATP, and thereafter linking this residue to the side chain of a cysteine residue in E1, yielding a UFM1-E1 thioester and free AMP. Activates UFM1 via a trans-binding mechanism, in which UFM1 interacts with distinct sites in both subunits of the UBA5 homodimer. Trans-binding also promotes stabilization of the UBA5 homodimer, and enhances ATP-binding. Transfer of UFM1 from UBA5 to the E2-like enzyme UFC1 also takes place using a trans mechanism. Ufmylation plays a key role in various processes, such as ribosome recycling, response to DNA damage, interferon response or reticulophagy (also called ER-phagy). Ufmylation is essential for erythroid differentiation of both megakaryocytes and erythrocytes. The polypeptide is Ubiquitin-like modifier-activating enzyme 5 (Rattus norvegicus (Rat)).